The sequence spans 751 residues: Catalase-peroxidase (751 aa).

The tryptophyl-tyrosyl-methioninium (Trp-Tyr) (with M-266) cross-link spans 92 to 240 (WHSAGTYRVT…VAAAHMGLIY (149 aa)). His-93 functions as the Proton acceptor in the catalytic mechanism. A cross-link (tryptophyl-tyrosyl-methioninium (Tyr-Met) (with W-92)) is located at residues 240–266 (YVNPEGPDGVPDPIAAARDIRTTFHRM). His-281 serves as a coordination point for heme b.

Belongs to the peroxidase family. Peroxidase/catalase subfamily. Homodimer or homotetramer. Heme b serves as cofactor. In terms of processing, formation of the three residue Trp-Tyr-Met cross-link is important for the catalase, but not the peroxidase activity of the enzyme.

It localises to the cytoplasm. The catalysed reaction is H2O2 + AH2 = A + 2 H2O. The enzyme catalyses 2 H2O2 = O2 + 2 H2O. Functionally, bifunctional enzyme with both catalase and broad-spectrum peroxidase activity. This is Catalase-peroxidase from Phaeosphaeria nodorum (strain SN15 / ATCC MYA-4574 / FGSC 10173) (Glume blotch fungus).